An 87-amino-acid polypeptide reads, in one-letter code: Small ribosomal subunit protein bS20 (87 aa).

Residues 1 to 25 (MANIKSAKKRAVQSEKRRKHNASRR) are disordered.

It belongs to the bacterial ribosomal protein bS20 family.

Binds directly to 16S ribosomal RNA. This chain is Small ribosomal subunit protein bS20, found in Yersinia pseudotuberculosis serotype O:1b (strain IP 31758).